Here is a 122-residue protein sequence, read N- to C-terminus: Holo-[acyl-carrier-protein] synthase (122 aa).

Residues aspartate 5 and glutamate 54 each contribute to the Mg(2+) site.

Belongs to the P-Pant transferase superfamily. AcpS family. It depends on Mg(2+) as a cofactor.

It is found in the cytoplasm. It catalyses the reaction apo-[ACP] + CoA = holo-[ACP] + adenosine 3',5'-bisphosphate + H(+). Transfers the 4'-phosphopantetheine moiety from coenzyme A to a Ser of acyl-carrier-protein. In Aquifex aeolicus (strain VF5), this protein is Holo-[acyl-carrier-protein] synthase.